Here is a 468-residue protein sequence, read N- to C-terminus: Acetyl-CoA decarbonylase/synthase complex subunit gamma (468 aa).

Residues 1–60 (MKINSPLEAYKYLPQTNCGECGEATCMAFASKLIDRSGKTSDCPPLIKEKKFAKKLAELD) form the 4Fe-4S domain. 4 residues coordinate [4Fe-4S] cluster: C18, C21, C26, and C43.

In terms of assembly, heterodimer of delta and gamma chains. The ACDS complex is made up of alpha, epsilon, beta, gamma and delta chains with a probable stoichiometry of (alpha(2)epsilon(2))(4)-beta(8)-(gamma(1)delta(1))(8). Corrinoid is required as a cofactor. [4Fe-4S] cluster serves as cofactor.

The catalysed reaction is 5,6,7,8-tetrahydrosarcinapterin + methyl-Co(III)-[corrinoid Fe-S protein] = 5-methyltetrahydrosarcinapterin + Co(I)-[corrinoid Fe-S protein] + H(+). The protein operates within one-carbon metabolism; methanogenesis from acetate. Functionally, part of a complex that catalyzes the reversible cleavage of acetyl-CoA, allowing growth on acetate as sole source of carbon and energy. The protein is Acetyl-CoA decarbonylase/synthase complex subunit gamma of Methanosarcina acetivorans (strain ATCC 35395 / DSM 2834 / JCM 12185 / C2A).